We begin with the raw amino-acid sequence, 173 residues long: Protein-export protein SecB (173 aa).

This sequence belongs to the SecB family. In terms of assembly, homotetramer, a dimer of dimers. One homotetramer interacts with 1 SecA dimer.

It is found in the cytoplasm. One of the proteins required for the normal export of preproteins out of the cell cytoplasm. It is a molecular chaperone that binds to a subset of precursor proteins, maintaining them in a translocation-competent state. It also specifically binds to its receptor SecA. The polypeptide is Protein-export protein SecB (Ralstonia nicotianae (strain ATCC BAA-1114 / GMI1000) (Ralstonia solanacearum)).